A 162-amino-acid chain; its full sequence is Disulfide bond formation protein B (162 aa).

The Cytoplasmic segment spans residues 1 to 8; the sequence is MTPLFRKA. The helical transmembrane segment at 9–25 threads the bilayer; that stretch reads VWLLFAVSVCAFAGSLA. Topologically, residues 26-43 are periplasmic; that stretch reads AQYVLGMEPCVLCISQRL. Residues Cys-35 and Cys-38 are joined by a disulfide bond. A helical membrane pass occupies residues 44–60; that stretch reads CVLATALCAAIVLMCRP. Residues 61-67 are Cytoplasmic-facing; it reads RRKAGGL. A helical transmembrane segment spans residues 68-85; sequence FGAVFISIPAVTGISVAA. Over 86–141 the chain is Periplasmic; the sequence is YQLWLQSLPPGTAPSCGAPWTFRLKGWPLFDWFEPVVRGFGNCAEPDYLLGVALPV. Cys-101 and Cys-128 are joined by a disulfide. The chain crosses the membrane as a helical span at residues 142 to 160; the sequence is WSVAYFLAVALTVWWAWAR. The Cytoplasmic segment spans residues 161–162; it reads AK.

Belongs to the DsbB family.

The protein resides in the cell inner membrane. Required for disulfide bond formation in some periplasmic proteins. Acts by oxidizing the DsbA protein. The chain is Disulfide bond formation protein B from Neisseria meningitidis serogroup A / serotype 4A (strain DSM 15465 / Z2491).